The primary structure comprises 618 residues: Indolepyruvate oxidoreductase subunit IorA (618 aa).

4Fe-4S ferredoxin-type domains are found at residues 558 to 587 (GRPMAVDGEKCDLCLECIRDLACPAMVTRE) and 588 to 617 (GEVFIDPLKCRGCSVCLQICPAGAIKPEGK). [4Fe-4S] cluster contacts are provided by C568, C571, C574, C580, C597, C600, C603, and C607.

In terms of assembly, heterodimer of the IorA and IorB subunits. Requires [4Fe-4S] cluster as cofactor.

It catalyses the reaction indole-3-pyruvate + 2 oxidized [2Fe-2S]-[ferredoxin] + CoA = (indol-3-yl)acetyl-CoA + 2 reduced [2Fe-2S]-[ferredoxin] + CO2 + H(+). In terms of biological role, catalyzes the ferredoxin-dependent oxidative decarboxylation of arylpyruvates. This chain is Indolepyruvate oxidoreductase subunit IorA (iorA), found in Methanothermobacter thermautotrophicus (strain ATCC 29096 / DSM 1053 / JCM 10044 / NBRC 100330 / Delta H) (Methanobacterium thermoautotrophicum).